We begin with the raw amino-acid sequence, 251 residues long: MAQVDLNCDMGESFGIYQMGTDTQIMPLVSSANIACGFHAGDPSVMRKTLEAAVAQGVALGAHPGLPDLVGFGRRNMQVSAQEAYDMVVYQVGALAGFAKAAGVSLHHVKPHGALYNMAAKDKALADAIARAVRDIDASLVLYGLAGSQLIQAGKNAGLRVASEVFADRTYQADGSLTSRSQPNALLQSDEEAVQQVLTMVTEKRVKAVTGEWVSLDADTICIHGDGAHALSFATKVRAALLQAGVEIKAM.

It belongs to the LamB/PxpA family. As to quaternary structure, forms a complex composed of PxpA, PxpB and PxpC.

It carries out the reaction 5-oxo-L-proline + ATP + 2 H2O = L-glutamate + ADP + phosphate + H(+). Functionally, catalyzes the cleavage of 5-oxoproline to form L-glutamate coupled to the hydrolysis of ATP to ADP and inorganic phosphate. This Tolumonas auensis (strain DSM 9187 / NBRC 110442 / TA 4) protein is 5-oxoprolinase subunit A.